The following is a 354-amino-acid chain: Dihydroorotate dehydrogenase (quinone) (354 aa).

Residues 67 to 71 (AGFDK) and Thr-91 contribute to the FMN site. Lys-71 contacts substrate. 116-120 (NRMGF) contributes to the substrate binding site. The FMN site is built by Asn-144 and Asn-177. Asn-177 contributes to the substrate binding site. Ser-180 acts as the Nucleophile in catalysis. Position 182 (Asn-182) interacts with substrate. FMN contacts are provided by Lys-213 and Thr-241. 242 to 243 (NT) contacts substrate. FMN-binding positions include Gly-265, Gly-294, and 315–316 (YT).

The protein belongs to the dihydroorotate dehydrogenase family. Type 2 subfamily. In terms of assembly, monomer. Requires FMN as cofactor.

The protein resides in the cell membrane. It catalyses the reaction (S)-dihydroorotate + a quinone = orotate + a quinol. Its pathway is pyrimidine metabolism; UMP biosynthesis via de novo pathway; orotate from (S)-dihydroorotate (quinone route): step 1/1. Functionally, catalyzes the conversion of dihydroorotate to orotate with quinone as electron acceptor. The polypeptide is Dihydroorotate dehydrogenase (quinone) (Mycolicibacterium smegmatis (strain ATCC 700084 / mc(2)155) (Mycobacterium smegmatis)).